The chain runs to 462 residues: Anthranilate synthase component 1 (462 aa).

Residues S37 and 244-246 (PYM) each bind L-tryptophan. 279–280 (GT) contacts chorismate. Mg(2+) is bound at residue E306. Chorismate contacts are provided by residues Y394, R414, 428–430 (GAG), and G430. E443 contributes to the Mg(2+) binding site.

The protein belongs to the anthranilate synthase component I family. As to quaternary structure, heterotetramer consisting of two non-identical subunits: a beta subunit (TrpG) and a large alpha subunit (TrpE). Requires Mg(2+) as cofactor.

The catalysed reaction is chorismate + L-glutamine = anthranilate + pyruvate + L-glutamate + H(+). The protein operates within amino-acid biosynthesis; L-tryptophan biosynthesis; L-tryptophan from chorismate: step 1/5. With respect to regulation, feedback inhibited by tryptophan. Its function is as follows. Part of a heterotetrameric complex that catalyzes the two-step biosynthesis of anthranilate, an intermediate in the biosynthesis of L-tryptophan. In the first step, the glutamine-binding beta subunit (TrpG) of anthranilate synthase (AS) provides the glutamine amidotransferase activity which generates ammonia as a substrate that, along with chorismate, is used in the second step, catalyzed by the large alpha subunit of AS (TrpE) to produce anthranilate. In the absence of TrpG, TrpE can synthesize anthranilate directly from chorismate and high concentrations of ammonia. This is Anthranilate synthase component 1 (trpE) from Thermus thermophilus (strain ATCC 27634 / DSM 579 / HB8).